Consider the following 508-residue polypeptide: UDP-N-acetylmuramoyl-L-alanyl-D-glutamate--2,6-diaminopimelate ligase (508 aa).

Position 33 (Ser-33) interacts with UDP-N-acetyl-alpha-D-muramoyl-L-alanyl-D-glutamate. Gly-121–Thr-127 serves as a coordination point for ATP. UDP-N-acetyl-alpha-D-muramoyl-L-alanyl-D-glutamate-binding positions include Asn-162, Thr-163 to Thr-164, Ser-190, Gln-196, and Arg-198. Lys-230 bears the N6-carboxylysine mark. Residues Arg-399, Asp-423 to Arg-426, Gly-474, and Glu-478 contribute to the meso-2,6-diaminopimelate site. The Meso-diaminopimelate recognition motif signature appears at Asp-423–Arg-426.

It belongs to the MurCDEF family. MurE subfamily. Mg(2+) is required as a cofactor. Post-translationally, carboxylation is probably crucial for Mg(2+) binding and, consequently, for the gamma-phosphate positioning of ATP.

The protein localises to the cytoplasm. It catalyses the reaction UDP-N-acetyl-alpha-D-muramoyl-L-alanyl-D-glutamate + meso-2,6-diaminopimelate + ATP = UDP-N-acetyl-alpha-D-muramoyl-L-alanyl-gamma-D-glutamyl-meso-2,6-diaminopimelate + ADP + phosphate + H(+). Its pathway is cell wall biogenesis; peptidoglycan biosynthesis. Catalyzes the addition of meso-diaminopimelic acid to the nucleotide precursor UDP-N-acetylmuramoyl-L-alanyl-D-glutamate (UMAG) in the biosynthesis of bacterial cell-wall peptidoglycan. The polypeptide is UDP-N-acetylmuramoyl-L-alanyl-D-glutamate--2,6-diaminopimelate ligase (Buchnera aphidicola subsp. Baizongia pistaciae (strain Bp)).